The primary structure comprises 98 residues: Large ribosomal subunit protein uL23 (98 aa).

It belongs to the universal ribosomal protein uL23 family. As to quaternary structure, part of the 50S ribosomal subunit. Contacts protein L29, and trigger factor when it is bound to the ribosome.

One of the early assembly proteins it binds 23S rRNA. One of the proteins that surrounds the polypeptide exit tunnel on the outside of the ribosome. Forms the main docking site for trigger factor binding to the ribosome. This is Large ribosomal subunit protein uL23 from Lactobacillus johnsonii (strain CNCM I-12250 / La1 / NCC 533).